The primary structure comprises 214 residues: ATP-dependent Clp protease proteolytic subunit (214 aa).

Catalysis depends on serine 113, which acts as the Nucleophile. Histidine 138 is a catalytic residue.

The protein belongs to the peptidase S14 family. As to quaternary structure, fourteen ClpP subunits assemble into 2 heptameric rings which stack back to back to give a disk-like structure with a central cavity, resembling the structure of eukaryotic proteasomes.

It localises to the cytoplasm. It carries out the reaction Hydrolysis of proteins to small peptides in the presence of ATP and magnesium. alpha-casein is the usual test substrate. In the absence of ATP, only oligopeptides shorter than five residues are hydrolyzed (such as succinyl-Leu-Tyr-|-NHMec, and Leu-Tyr-Leu-|-Tyr-Trp, in which cleavage of the -Tyr-|-Leu- and -Tyr-|-Trp bonds also occurs).. In terms of biological role, cleaves peptides in various proteins in a process that requires ATP hydrolysis. Has a chymotrypsin-like activity. Plays a major role in the degradation of misfolded proteins. This Teredinibacter turnerae (strain ATCC 39867 / T7901) protein is ATP-dependent Clp protease proteolytic subunit.